Here is a 475-residue protein sequence, read N- to C-terminus: AP-1 complex subunit mu-1-I (475 aa).

Residues 175–473 (KNEAFLDIVE…TQSGDDYTIR (299 aa)) enclose the MHD domain. A disordered region spans residues 240-262 (ASATTSDNNTETDKKPSITSSSA).

It belongs to the adaptor complexes medium subunit family. In terms of assembly, adaptor protein complex 1 (AP-1) is a heterotetramer composed of two large adaptins (gamma-type subunit APL4 and beta-type subunit APL2), a medium adaptin (mu-type subunit APM1) and a small adaptin (sigma-type subunit APS1). AP-1 interacts with clathrin.

It is found in the cytoplasmic vesicle. The protein resides in the clathrin-coated vesicle membrane. The protein localises to the membrane. It localises to the clathrin-coated pit. Component of the adaptor complexes which link clathrin to receptors in coated vesicles. Clathrin-associated protein complexes are believed to interact with the cytoplasmic tails of membrane proteins, leading to their selection and concentration. The AP-1 complex interacts directly with clathrin. AP57 is probably a subunit of the Golgi membrane adaptor. This chain is AP-1 complex subunit mu-1-I (APM1), found in Saccharomyces cerevisiae (strain ATCC 204508 / S288c) (Baker's yeast).